The following is a 177-amino-acid chain: MSRVAKAPIEIPAGVEVTLNGQEVTIKGAQGSLSRVVNDAVELVKDESELRTNAREGVANSTAQAGTARALLQNMVVGVTKGFERKLQLIGVGYRAQAQGKKLNLTLGFSHPVEFEIPEGITIDTPTQTEVVVKGADKQLVGQVAANIRAYRKPEPYKGKGVRYADEQVRRKEAKKK.

It belongs to the universal ribosomal protein uL6 family. In terms of assembly, part of the 50S ribosomal subunit.

In terms of biological role, this protein binds to the 23S rRNA, and is important in its secondary structure. It is located near the subunit interface in the base of the L7/L12 stalk, and near the tRNA binding site of the peptidyltransferase center. The polypeptide is Large ribosomal subunit protein uL6 (Idiomarina loihiensis (strain ATCC BAA-735 / DSM 15497 / L2-TR)).